A 153-amino-acid polypeptide reads, in one-letter code: Deoxyuridine 5'-triphosphate nucleotidohydrolase (153 aa).

Residues 71 to 73 (RSG), Asn84, 88 to 90 (TID), and Lys98 each bind substrate.

This sequence belongs to the dUTPase family. Requires Mg(2+) as cofactor.

The enzyme catalyses dUTP + H2O = dUMP + diphosphate + H(+). Its pathway is pyrimidine metabolism; dUMP biosynthesis; dUMP from dCTP (dUTP route): step 2/2. In terms of biological role, this enzyme is involved in nucleotide metabolism: it produces dUMP, the immediate precursor of thymidine nucleotides and it decreases the intracellular concentration of dUTP so that uracil cannot be incorporated into DNA. The polypeptide is Deoxyuridine 5'-triphosphate nucleotidohydrolase (Wolbachia sp. subsp. Drosophila simulans (strain wRi)).